The following is a 625-amino-acid chain: Mesothelin (625 aa).

Residues 1-35 (MALPTAQPLLGSCGSPICSRSFLLLLLSLGWLPLL) form the signal peptide. Ser202 bears the Phosphoserine mark. An intrachain disulfide couples Cys304 to Cys328. 3 N-linked (GlcNAc...) asparagine glycosylation sites follow: Asn390, Asn488, and Asn517. Residue Ser600 is the site of GPI-anchor amidated serine attachment. A propeptide spans 601-625 (SGAPLLGPGFVFAWIPALLSALRLS) (removed in mature form).

This sequence belongs to the mesothelin family. In terms of assembly, interacts with MUC16. Post-translationally, proteolytically cleaved by a furin-like convertase to generate megakaryocyte-potentiating factor (MPF), and the cleaved form of mesothelin. In terms of tissue distribution, specifically expressed in lung. Overexpressed in hereditary renal carcinoma developed by Eker rats.

It localises to the cell membrane. Its subcellular location is the golgi apparatus. The protein resides in the secreted. Functionally, membrane-anchored forms may play a role in cellular adhesion. Megakaryocyte-potentiating factor (MPF) may potentiate megakaryocyte colony formation. The chain is Mesothelin (Msln) from Rattus norvegicus (Rat).